We begin with the raw amino-acid sequence, 459 residues long: Arginine biosynthesis bifunctional protein ArgJ, mitochondrial (459 aa).

Positions 187, 216, 227, 314, 454, and 459 each coordinate substrate. Thr-227 serves as the catalytic Nucleophile.

This sequence belongs to the ArgJ family. As to quaternary structure, heterodimer of an alpha and a beta chain. The alpha and beta chains are autoproteolytically processed from a single precursor protein within the mitochondrion.

It is found in the mitochondrion matrix. The enzyme catalyses N(2)-acetyl-L-ornithine + L-glutamate = N-acetyl-L-glutamate + L-ornithine. It catalyses the reaction L-glutamate + acetyl-CoA = N-acetyl-L-glutamate + CoA + H(+). It participates in amino-acid biosynthesis; L-arginine biosynthesis; L-ornithine and N-acetyl-L-glutamate from L-glutamate and N(2)-acetyl-L-ornithine (cyclic): step 1/1. It functions in the pathway amino-acid biosynthesis; L-arginine biosynthesis; N(2)-acetyl-L-ornithine from L-glutamate: step 1/4. In terms of biological role, catalyzes two activities which are involved in the cyclic version of arginine biosynthesis: the synthesis of acetylglutamate from glutamate and acetyl-CoA, and of ornithine by transacetylation between acetylornithine and glutamate. The chain is Arginine biosynthesis bifunctional protein ArgJ, mitochondrial from Uncinocarpus reesii (strain UAMH 1704).